A 96-amino-acid chain; its full sequence is Nucleoid-associated protein CT_335 (96 aa).

The protein belongs to the YbaB/EbfC family. In terms of assembly, homodimer.

It is found in the cytoplasm. It localises to the nucleoid. Functionally, binds to DNA and alters its conformation. May be involved in regulation of gene expression, nucleoid organization and DNA protection. This is Nucleoid-associated protein CT_335 from Chlamydia trachomatis serovar D (strain ATCC VR-885 / DSM 19411 / UW-3/Cx).